The following is a 388-amino-acid chain: MTDTSFIESEERQALRKAVASWVANYGHEYYLDKARKHEHTSELWAEAGKLGFLGVNLPEEYGGGGAGMYELSLVMEEMAAAGSALLLMVVSPAINGTIIAKFGTDDQKKRWLPGIADGSLTMAFAITEPDAGSNSHKITTTARRDGSDWIIKGQKVFISGIDQAQAVLVVGRSEEAKTGKLRPALFVVPTDAPGFSYTPIEMELVSPERQFQVFLDDVRLPADALVGAEDAAIAHLFAGLNPERIMGAASAVGMGRFALGRAVDYVKTRKVWSTPIGAHQGLAHPLAQCHIEVELAKLMTQKAATLYDHGDDFGAAEAANMAKYAAAEASSRAVDQAVQSMGGNGLTKEYGVAAMMTSARLARIAPISREMVLNFVAQTSLGLPRSY.

This sequence belongs to the acyl-CoA dehydrogenase family. It depends on FAD as a cofactor.

It catalyses the reaction a 2,3-saturated acyl-CoA + A = a 2,3-dehydroacyl-CoA + AH2. In Mycobacterium bovis (strain ATCC BAA-935 / AF2122/97), this protein is Acyl-CoA dehydrogenase fadE12 (fadE12).